We begin with the raw amino-acid sequence, 227 residues long: 4-nitrobenzoate reductase (227 aa).

15-19 (RRAVR) serves as a coordination point for FMN. Ser45, Tyr102, and Ile107 together coordinate NAD(+). FMN is bound at residue Arg213.

This sequence belongs to the nitroreductase family. It depends on FMN as a cofactor.

It catalyses the reaction 4-nitrobenzoate + 2 NADH + 2 H(+) = 4-hydroxylaminobenzoate + 2 NAD(+) + H2O. Nitroreductase involved in the degradation of nitroaromatic compounds. Catalyzes the conversion of 4-nitrobenzoate to 4-hydroxylaminobenzoate. Required for the catabolism of 4-nitrotoluene. The polypeptide is 4-nitrobenzoate reductase (Pseudomonas putida (Arthrobacter siderocapsulatus)).